Consider the following 294-residue polypeptide: NAD kinase (294 aa).

Residue aspartate 74 is the Proton acceptor of the active site. NAD(+)-binding positions include 74-75 (DG), lysine 79, 149-150 (NE), aspartate 179, 190-195 (TGYSLS), and alanine 214.

It belongs to the NAD kinase family. The cofactor is a divalent metal cation.

It localises to the cytoplasm. The catalysed reaction is NAD(+) + ATP = ADP + NADP(+) + H(+). Functionally, involved in the regulation of the intracellular balance of NAD and NADP, and is a key enzyme in the biosynthesis of NADP. Catalyzes specifically the phosphorylation on 2'-hydroxyl of the adenosine moiety of NAD to yield NADP. In Christiangramia forsetii (strain DSM 17595 / CGMCC 1.15422 / KT0803) (Gramella forsetii), this protein is NAD kinase.